The following is a 293-amino-acid chain: N-acetylneuraminate lyase (293 aa).

Aceneuramate is bound by residues S48 and S49. Y137 acts as the Proton donor in catalysis. The active-site Schiff-base intermediate with substrate is the K165. Residues T167, G189, D191, E192, and S208 each coordinate aceneuramate.

The protein belongs to the DapA family. NanA subfamily. Homotetramer.

The protein resides in the cytoplasm. It carries out the reaction aceneuramate = aldehydo-N-acetyl-D-mannosamine + pyruvate. It participates in amino-sugar metabolism; N-acetylneuraminate degradation; D-fructose 6-phosphate from N-acetylneuraminate: step 1/5. Functionally, catalyzes the reversible aldol cleavage of N-acetylneuraminic acid (sialic acid; Neu5Ac) to form pyruvate and N-acetylmannosamine (ManNAc) via a Schiff base intermediate. The sequence is that of N-acetylneuraminate lyase from Staphylococcus aureus (strain bovine RF122 / ET3-1).